The following is a 309-amino-acid chain: Ferrochelatase (309 aa).

Histidine 185 and glutamate 264 together coordinate Fe cation.

Belongs to the ferrochelatase family.

Its subcellular location is the cytoplasm. The enzyme catalyses heme b + 2 H(+) = protoporphyrin IX + Fe(2+). It functions in the pathway porphyrin-containing compound metabolism; protoheme biosynthesis; protoheme from protoporphyrin-IX: step 1/1. Its function is as follows. Catalyzes the ferrous insertion into protoporphyrin IX. The protein is Ferrochelatase of Aquifex aeolicus (strain VF5).